A 185-amino-acid chain; its full sequence is PXMP2/4 family protein 4 (185 aa).

The next 3 helical transmembrane spans lie at 63–83, 100–120, and 141–161; these read MAVF…KYLD, IDQV…MGIL, and VSDC…ISSI.

This sequence belongs to the peroxisomal membrane protein PXMP2/4 family.

The protein localises to the membrane. This Dictyostelium discoideum (Social amoeba) protein is PXMP2/4 family protein 4.